We begin with the raw amino-acid sequence, 160 residues long: Globin-like protein (160 aa).

The Globin domain maps to 2-152 (SMTRQEIQDL…FNAECQVHLK (151 aa)). His-101 is a binding site for heme.

Belongs to the globin family.

The protein resides in the cytoplasm. Its function is as follows. May be a globin and may play a role in oxygen transport. In Caenorhabditis briggsae, this protein is Globin-like protein (glb-1).